The following is a 239-amino-acid chain: Peptidyl-tRNA hydrolase (239 aa).

Tyr14 provides a ligand contact to tRNA. The active-site Proton acceptor is the His19. Residues Phe64, Asn66, and Asn112 each contribute to the tRNA site.

The protein belongs to the PTH family. Monomer.

Its subcellular location is the cytoplasm. The catalysed reaction is an N-acyl-L-alpha-aminoacyl-tRNA + H2O = an N-acyl-L-amino acid + a tRNA + H(+). In terms of biological role, hydrolyzes ribosome-free peptidyl-tRNAs (with 1 or more amino acids incorporated), which drop off the ribosome during protein synthesis, or as a result of ribosome stalling. Catalyzes the release of premature peptidyl moieties from peptidyl-tRNA molecules trapped in stalled 50S ribosomal subunits, and thus maintains levels of free tRNAs and 50S ribosomes. This chain is Peptidyl-tRNA hydrolase, found in Rhizobium meliloti (strain 1021) (Ensifer meliloti).